A 126-amino-acid polypeptide reads, in one-letter code: Fluoride-specific ion channel FluC (126 aa).

3 helical membrane passes run 35 to 55 (WWTL…IGLL), 71 to 91 (VGML…WLLF), and 101 to 121 (LYVV…MILI). Residues Gly-75 and Thr-78 each coordinate Na(+).

Belongs to the fluoride channel Fluc/FEX (TC 1.A.43) family.

It is found in the cell inner membrane. The enzyme catalyses fluoride(in) = fluoride(out). With respect to regulation, na(+) is not transported, but it plays an essential structural role and its presence is essential for fluoride channel function. Its function is as follows. Fluoride-specific ion channel. Important for reducing fluoride concentration in the cell, thus reducing its toxicity. The polypeptide is Fluoride-specific ion channel FluC (Sphingopyxis alaskensis (strain DSM 13593 / LMG 18877 / RB2256) (Sphingomonas alaskensis)).